Consider the following 408-residue polypeptide: Peptidase T (408 aa).

Residue His-81 coordinates Zn(2+). Residue Asp-83 is part of the active site. Asp-142 contributes to the Zn(2+) binding site. The Proton acceptor role is filled by Glu-176. Zn(2+)-binding residues include Glu-177, Asp-199, and His-381.

Belongs to the peptidase M20B family. Requires Zn(2+) as cofactor.

Its subcellular location is the cytoplasm. The catalysed reaction is Release of the N-terminal residue from a tripeptide.. Cleaves the N-terminal amino acid of tripeptides. In Streptococcus gordonii (strain Challis / ATCC 35105 / BCRC 15272 / CH1 / DL1 / V288), this protein is Peptidase T.